Reading from the N-terminus, the 172-residue chain is Transmembrane protein 91 (172 aa).

Disordered regions lie at residues 1–31 (MDSP…RHEL) and 55–83 (PSVS…DWDG). The Extracellular segment spans residues 1-97 (MDSPSLRELQ…SPFLPHDHLG (97 aa)). Residues 69–81 (VEDMSSSDSDSDW) show a composition bias toward acidic residues. Residues 98–118 (LAVFSMLCCFWPVGIAAFCLA) form a helical membrane-spanning segment. Residues 119–139 (QKTNKAWAKGDIQGAGAASRR) are Cytoplasmic-facing. The helical transmembrane segment at 140-160 (AFLLGVLAVGLGVCTYAAALV) threads the bilayer. Topologically, residues 161-172 (TLAAYLASRDPP) are extracellular.

It belongs to the CD225/Dispanin family.

It is found in the membrane. This chain is Transmembrane protein 91 (TMEM91), found in Homo sapiens (Human).